The sequence spans 442 residues: Coiled-coil domain-containing protein 91 (442 aa).

Positions 1–16 (MDDDDFGGFEAAETFD) are GGA1-binding motif. A disordered region spans residues 1–27 (MDDDDFGGFEAAETFDGEQGGNQAVSP). Phosphoserine occurs at positions 43 and 46. Disordered stretches follow at residues 48 to 80 (ELIL…ADSS) and 114 to 134 (HGAL…SNSQ). Coiled coils occupy residues 130-210 (VSNS…GHEA), 253-318 (HAQH…MKDV), and 346-408 (ARDQ…RRLD). The interval 211–414 (LSIIVDEYKA…RRLDQVTRQR (204 aa)) is homodimerization.

Homodimer. Interacts with GGA1, GGA2 and AP1G1.

The protein localises to the membrane. It localises to the golgi apparatus. It is found in the trans-Golgi network membrane. Its subcellular location is the trans-Golgi network. In terms of biological role, involved in the regulation of membrane traffic through the trans-Golgi network (TGN). Functions in close cooperation with the GGAs in the sorting of hydrolases to lysosomes. This is Coiled-coil domain-containing protein 91 (Ccdc91) from Mus musculus (Mouse).